Consider the following 591-residue polypeptide: ATP-dependent lipid A-core flippase (591 aa).

The next 5 membrane-spanning stretches (helical) occupy residues 34–54 (LILA…LAVI), 71–91 (IWSV…CNFF), 158–178 (LVVI…TVII), 258–278 (LTPL…AVAL), and 285–305 (TLTA…FDPI). The region spanning 35–317 (ILAVLLMAGA…LTNLASKMQK (283 aa)) is the ABC transmembrane type-1 domain. The 237-residue stretch at 350–586 (IEFRQIGHRF…GGLYATLYNM (237 aa)) folds into the ABC transporter domain. ATP is bound at residue 384-391 (GRSGSGKT).

Belongs to the ABC transporter superfamily. Lipid exporter (TC 3.A.1.106) family. In terms of assembly, homodimer.

The protein resides in the cell inner membrane. The enzyme catalyses ATP + H2O + lipid A-core oligosaccharideSide 1 = ADP + phosphate + lipid A-core oligosaccharideSide 2.. In terms of biological role, involved in lipopolysaccharide (LPS) biosynthesis. Translocates lipid A-core from the inner to the outer leaflet of the inner membrane. Transmembrane domains (TMD) form a pore in the inner membrane and the ATP-binding domain (NBD) is responsible for energy generation. This Bordetella avium (strain 197N) protein is ATP-dependent lipid A-core flippase.